A 244-amino-acid polypeptide reads, in one-letter code: 1-(5-phosphoribosyl)-5-[(5-phosphoribosylamino)methylideneamino] imidazole-4-carboxamide isomerase (244 aa).

Asp10 serves as the catalytic Proton acceptor. The active-site Proton donor is Asp132.

It belongs to the HisA/HisF family.

The protein localises to the cytoplasm. The enzyme catalyses 1-(5-phospho-beta-D-ribosyl)-5-[(5-phospho-beta-D-ribosylamino)methylideneamino]imidazole-4-carboxamide = 5-[(5-phospho-1-deoxy-D-ribulos-1-ylimino)methylamino]-1-(5-phospho-beta-D-ribosyl)imidazole-4-carboxamide. It participates in amino-acid biosynthesis; L-histidine biosynthesis; L-histidine from 5-phospho-alpha-D-ribose 1-diphosphate: step 4/9. The sequence is that of 1-(5-phosphoribosyl)-5-[(5-phosphoribosylamino)methylideneamino] imidazole-4-carboxamide isomerase from Stenotrophomonas maltophilia (strain R551-3).